The sequence spans 134 residues: Tripartite terminase subunit 2 (134 aa).

This sequence belongs to the herpesviridae TRM2 protein family. As to quaternary structure, associates with TRM1 and TRM3 to form the tripartite terminase complex.

The protein resides in the host nucleus. Its function is as follows. Component of the molecular motor that translocates viral genomic DNA in empty capsid during DNA packaging. Forms a tripartite terminase complex together with TRM1 and TRM3 in the host cytoplasm. Once the complex reaches the host nucleus, it interacts with the capsid portal vertex. This portal forms a ring in which genomic DNA is translocated into the capsid. The chain is Tripartite terminase subunit 2 from Gallus gallus (Chicken).